Reading from the N-terminus, the 309-residue chain is Taste receptor type 2 member 20 (309 aa).

The Extracellular portion of the chain corresponds to 1 to 6 (MMSFLH). A helical membrane pass occupies residues 7-27 (IVFSILVVVAFILGNFANGFI). The Cytoplasmic portion of the chain corresponds to 28 to 46 (ALINFIAWVKRQKISSADQ). A helical transmembrane segment spans residues 47-67 (IIAALAVSRVGLLWVILLHWY). The Extracellular portion of the chain corresponds to 68-79 (STVLNPTSSNLK). A helical membrane pass occupies residues 80-100 (VIIFISNAWAVTNHFSIWLAT). At 101–125 (SLSIFYLLKIVNFSRLIFHHLKRKA) the chain is on the cytoplasmic side. Residues 126 to 146 (KSVVLVIVLGSLFFLVCHLVM) form a helical membrane-spanning segment. Residues 147-178 (KNTYINVWTEECEGNVTWKIKLRNAMHLSNLT) are Extracellular-facing. The chain crosses the membrane as a helical span at residues 179–199 (VAMLANLIPFTLTLISFLLLI). At 200 to 229 (YSLCKHLKKMQLHGKGSQDPSTKIHIKALQ) the chain is on the cytoplasmic side. Residues 230–250 (TVTSFLILLAIYFLCLITSFW) form a helical membrane-spanning segment. Residues 251–259 (NSKMRPKEI) are Extracellular-facing. Residues 260–280 (VLMLCQAFGIIYPSFHSFILI) form a helical membrane-spanning segment. Over 281–309 (WGNKTLKQTFLSVLWQVTCWAKGQNQSTP) the chain is Cytoplasmic.

The protein belongs to the G-protein coupled receptor T2R family.

It localises to the membrane. Its function is as follows. Receptor that may play a role in the perception of bitterness and is gustducin-linked. May play a role in sensing the chemical composition of the gastrointestinal content. The activity of this receptor may stimulate alpha gustducin, mediate PLC-beta-2 activation and lead to the gating of TRPM5. The protein is Taste receptor type 2 member 20 (TAS2R20) of Pan paniscus (Pygmy chimpanzee).